Here is a 133-residue protein sequence, read N- to C-terminus: uncharacterized protein (133 aa).

This is an uncharacterized protein from Human adenovirus B serotype 7 (HAdV-7).